A 246-amino-acid chain; its full sequence is Fasciclin-like arabinogalactan protein 11 (246 aa).

Positions 1–24 are cleaved as a signal peptide; the sequence is MATSRTFIFSNLFIFFLVIATTYG. One can recognise an FAS1 domain in the interval 34 to 179; it reads PTNITAILEK…LAVYQVDQVL (146 aa). Residues Asn-36, Asn-68, Asn-141, and Asn-150 are each glycosylated (N-linked (GlcNAc...) asparagine). The interval 193-222 is disordered; that stretch reads PAPEKGGSVSKGSASGGDDGGDSTDSSDAE. Ser-219 is lipidated: GPI-anchor amidated serine. A propeptide spans 220–246 (removed in mature form); that stretch reads DAERTGFGFGIRITTVAAIAASSSLWI.

Belongs to the fasciclin-like AGP family. As to expression, expressed in the sclerenchyma cells of inflorescence stems and siliques.

It localises to the cell membrane. May be a cell surface adhesion protein. This chain is Fasciclin-like arabinogalactan protein 11 (FLA11), found in Arabidopsis thaliana (Mouse-ear cress).